The primary structure comprises 422 residues: Glutamyl-tRNA reductase (422 aa).

Residues 50–53 (TCNR), Ser110, 115–117 (ETQ), and Gln121 each bind substrate. Cys51 serves as the catalytic Nucleophile. 190–195 (GAGEMS) is an NADP(+) binding site.

The protein belongs to the glutamyl-tRNA reductase family. In terms of assembly, homodimer.

It catalyses the reaction (S)-4-amino-5-oxopentanoate + tRNA(Glu) + NADP(+) = L-glutamyl-tRNA(Glu) + NADPH + H(+). It participates in porphyrin-containing compound metabolism; protoporphyrin-IX biosynthesis; 5-aminolevulinate from L-glutamyl-tRNA(Glu): step 1/2. Catalyzes the NADPH-dependent reduction of glutamyl-tRNA(Glu) to glutamate 1-semialdehyde (GSA). This chain is Glutamyl-tRNA reductase, found in Campylobacter fetus subsp. fetus (strain 82-40).